The primary structure comprises 154 residues: UPF0178 protein GM21_2006 (154 aa).

The protein belongs to the UPF0178 family.

In Geobacter sp. (strain M21), this protein is UPF0178 protein GM21_2006.